A 284-amino-acid chain; its full sequence is Small ribosomal subunit protein uS5y/uS5u/uS5v (284 aa).

A compositionally biased stretch (basic and acidic residues) spans 1–19 (MAERGGESGAERGGDRGDF). A disordered region spans residues 1–51 (MAERGGESGAERGGDRGDFGRGFGGGRGGGRGRDRGPRGRGRRGGRASEET). Over residues 20-29 (GRGFGGGRGG) the composition is skewed to gly residues. The S5 DRBM domain occupies 95 to 158 (LKDEVMKIMP…ILAKLSVVPV (64 aa)).

It belongs to the universal ribosomal protein uS5 family.

This Arabidopsis thaliana (Mouse-ear cress) protein is Small ribosomal subunit protein uS5y/uS5u/uS5v (RPS2B).